We begin with the raw amino-acid sequence, 591 residues long: Chaperone protein DnaK (591 aa).

Thr175 bears the Phosphothreonine; by autocatalysis mark. Residues 568-577 are compositionally biased toward low complexity; the sequence is AQAAEFANKQ. Residues 568–591 are disordered; that stretch reads AQAAEFANKQNESDPNNNSSEQNN. Residues 580-591 show a composition bias toward polar residues; the sequence is SDPNNNSSEQNN.

The protein belongs to the heat shock protein 70 family.

Acts as a chaperone. This chain is Chaperone protein DnaK, found in Mycoplasma mycoides subsp. mycoides SC (strain CCUG 32753 / NCTC 10114 / PG1).